A 151-amino-acid polypeptide reads, in one-letter code: MSLQFNSIALLLVSLILLGVLGNNSSITISATILLLMQQTFLAKYIPFMERYGVNIGIIVLTIGVLSPIVSGKVQLPNWTALIHWKMFLAMAVGVLVAWFGGRGVNLMGTQPSLLTGLLVGTILGVAFLGGVPVGPLIAAGILSLFIGKTG.

4 consecutive transmembrane segments (helical) span residues Met1–Leu21, Tyr52–Gly72, Ala81–Gly101, and Ile123–Leu143.

It belongs to the UPF0756 family.

Its subcellular location is the cell membrane. The polypeptide is UPF0756 membrane protein HSM_1471 (Histophilus somni (strain 2336) (Haemophilus somnus)).